The following is a 198-amino-acid chain: Pyridoxal 5'-phosphate synthase subunit PdxT (198 aa).

Gly-49 to Ser-51 is an L-glutamine binding site. Cys-81 acts as the Nucleophile in catalysis. L-glutamine contacts are provided by residues Arg-113 and Ile-141–Arg-142. Active-site charge relay system residues include His-177 and Glu-179.

This sequence belongs to the glutaminase PdxT/SNO family. As to quaternary structure, in the presence of PdxS, forms a dodecamer of heterodimers. Only shows activity in the heterodimer.

It carries out the reaction aldehydo-D-ribose 5-phosphate + D-glyceraldehyde 3-phosphate + L-glutamine = pyridoxal 5'-phosphate + L-glutamate + phosphate + 3 H2O + H(+). The enzyme catalyses L-glutamine + H2O = L-glutamate + NH4(+). It functions in the pathway cofactor biosynthesis; pyridoxal 5'-phosphate biosynthesis. Functionally, catalyzes the hydrolysis of glutamine to glutamate and ammonia as part of the biosynthesis of pyridoxal 5'-phosphate. The resulting ammonia molecule is channeled to the active site of PdxS. This chain is Pyridoxal 5'-phosphate synthase subunit PdxT, found in Mycobacterium leprae (strain TN).